We begin with the raw amino-acid sequence, 380 residues long: Glucose-1-phosphate adenylyltransferase (380 aa).

Alpha-D-glucose 1-phosphate contacts are provided by residues G164, 179–180 (EK), and S190.

The protein belongs to the bacterial/plant glucose-1-phosphate adenylyltransferase family. In terms of assembly, homotetramer.

The enzyme catalyses alpha-D-glucose 1-phosphate + ATP + H(+) = ADP-alpha-D-glucose + diphosphate. It participates in glycan biosynthesis; glycogen biosynthesis. Functionally, involved in the biosynthesis of ADP-glucose, a building block required for the elongation reactions to produce glycogen. Catalyzes the reaction between ATP and alpha-D-glucose 1-phosphate (G1P) to produce pyrophosphate and ADP-Glc. This Streptococcus sanguinis (strain SK36) protein is Glucose-1-phosphate adenylyltransferase.